Reading from the N-terminus, the 422-residue chain is Methylaspartate ammonia-lyase (422 aa).

Residue Q175 coordinates (2S,3S)-3-methyl-L-aspartate. Residues D239, E276, and D310 each coordinate Mg(2+). A (2S,3S)-3-methyl-L-aspartate-binding site is contributed by Q332. The active-site Proton acceptor is the K334. Position 363-364 (T363–C364) interacts with (2S,3S)-3-methyl-L-aspartate.

It belongs to the methylaspartate ammonia-lyase family. As to quaternary structure, homodimer. Mg(2+) is required as a cofactor.

The catalysed reaction is (2S,3S)-3-methyl-L-aspartate = mesaconate + NH4(+). It functions in the pathway amino-acid degradation; L-glutamate degradation via mesaconate pathway; acetate and pyruvate from L-glutamate: step 2/4. In terms of biological role, involved in the methylaspartate cycle. Catalyzes the formation of the alpha,beta-unsaturated bond by the reversible anti elimination of ammonia from L-threo-beta-methylaspartate (L-threo-(2S,3S)-3-methylaspartate) to give mesaconate. The protein is Methylaspartate ammonia-lyase (mal) of Haloarcula marismortui (strain ATCC 43049 / DSM 3752 / JCM 8966 / VKM B-1809) (Halobacterium marismortui).